We begin with the raw amino-acid sequence, 309 residues long: Histone-lysine N-methyltransferase SETMAR (309 aa).

The region spanning 74 to 137 is the Pre-SET domain; the sequence is PGCACIETPC…RCRNRVVQNG (64 aa). Zn(2+) contacts are provided by Cys76, Cys78, Cys83, Cys88, Cys90, Cys119, Cys123, Cys125, and Cys129. An SET domain is found at 140-264; it reads FLLQVFQTEK…PGEELSYDYS (125 aa). S-adenosyl-L-methionine-binding positions include 150 to 152, Tyr193, Arg221, and 224 to 225; these read KGW and NH. Positions 227, 288, 290, and 295 each coordinate Zn(2+). Residues 284-300 enclose the Post-SET domain; that stretch reads PRKPCYCGAQSCTTFLP.

Belongs to the class V-like SAM-binding methyltransferase superfamily.

The protein resides in the nucleus. Its subcellular location is the chromosome. The catalysed reaction is L-lysyl(36)-[histone H3] + 2 S-adenosyl-L-methionine = N(6),N(6)-dimethyl-L-lysyl(36)-[histone H3] + 2 S-adenosyl-L-homocysteine + 2 H(+). Histone methyltransferase that methylates 'Lys-4' and 'Lys-36' of histone H3, 2 specific tags for epigenetic transcriptional activation. Specifically mediates dimethylation of H3 'Lys-36'. The sequence is that of Histone-lysine N-methyltransferase SETMAR from Mus musculus (Mouse).